The following is a 204-amino-acid chain: Allurin (204 aa).

The signal sequence occupies residues 1–19 (MDTFNFIICISALFHSTYG). An SCP domain is found at 36–138 (VDLHNLLRRS…DKMIGHYTQV (103 aa)). A helical transmembrane segment spans residues 140-161 (WAKTYLLGCGLAFCPGNYYPYV).

This sequence belongs to the CRISP family. As to expression, expressed only in oviduct.

It localises to the membrane. The protein localises to the secreted. Involved in sperm chemoattraction. The chain is Allurin (crisp-a) from Xenopus tropicalis (Western clawed frog).